Reading from the N-terminus, the 254-residue chain is UPF0246 protein FTM_0239 (254 aa).

Belongs to the UPF0246 family.

This Francisella tularensis subsp. mediasiatica (strain FSC147) protein is UPF0246 protein FTM_0239.